A 457-amino-acid chain; its full sequence is uncharacterized protein (457 aa).

Residues 5-63 form the TRAM domain; the sequence is PVEEGQKFPLTIRRMGINGEGIGYFKKAVVFVPGAITGEEVVVEAVKVRDRFTEAKLNK. Positions 76, 82, 85, and 166 each coordinate [4Fe-4S] cluster. The S-adenosyl-L-methionine site is built by glutamine 290, tyrosine 319, aspartate 340, and aspartate 388. Cysteine 415 (nucleophile) is an active-site residue.

The protein belongs to the class I-like SAM-binding methyltransferase superfamily. RNA M5U methyltransferase family.

This is an uncharacterized protein from Listeria innocua serovar 6a (strain ATCC BAA-680 / CLIP 11262).